The chain runs to 480 residues: UDP-N-acetylmuramate--L-alanine ligase (480 aa).

126–132 provides a ligand contact to ATP; that stretch reads GTHGKTT.

This sequence belongs to the MurCDEF family.

It localises to the cytoplasm. The enzyme catalyses UDP-N-acetyl-alpha-D-muramate + L-alanine + ATP = UDP-N-acetyl-alpha-D-muramoyl-L-alanine + ADP + phosphate + H(+). Its pathway is cell wall biogenesis; peptidoglycan biosynthesis. Cell wall formation. In Blochmanniella pennsylvanica (strain BPEN), this protein is UDP-N-acetylmuramate--L-alanine ligase.